Reading from the N-terminus, the 440-residue chain is NK1 transcription factor-related protein 1 (440 aa).

The span at 1–13 (MSTSGPAAPGDVP) shows a compositional bias: low complexity. Disordered stretches follow at residues 1–82 (MSTS…RPTS), 145–291 (GVAA…PRRA), and 342–387 (KWKK…PMGA). A compositionally biased stretch (pro residues) spans 14 to 31 (ALPPPPPGPGSGPAPPAP). Composition is skewed to low complexity over residues 62 to 74 (VPAV…AARP) and 145 to 158 (GVAA…TSAG). Residues 170-181 (GYSSGSGRSPTA) show a composition bias toward polar residues. Positions 182 to 198 (DSEDEAPEDEDEEEAPE) are enriched in acidic residues. Residues 210–222 (GGSGGLGARGSGC) are compositionally biased toward gly residues. Over residues 237–269 (AAPGPRGNSPGAPGPPATATGAGSAGSTPQGAA) the composition is skewed to low complexity. Positions 288 to 347 (PRRARTAFTYEQLVALENKFKATRYLSVCERLNLALSLSLTETQVKIWFQNRRTKWKKQN) form a DNA-binding region, homeobox. The span at 356 to 374 (TGGGGGPGPGAGPGAGLPG) shows a compositional bias: gly residues.

It belongs to the NK-1 homeobox family.

Its subcellular location is the nucleus. In terms of biological role, may be required for the coordinated crosstalk of factors involved in the maintenance of energy homeostasis, possibly by regulating the transcription of specific factors involved in energy balance. The polypeptide is NK1 transcription factor-related protein 1 (Mus musculus (Mouse)).